The chain runs to 498 residues: uncharacterized protein (498 aa).

Residues 1–26 (MEESSMAQASLICLLLSFSIIMLSNA) form the signal peptide. The Extracellular segment spans residues 27 to 441 (ADISIDCGSS…GEEKSSSNLA (415 aa)). Asn-44, Asn-150, Asn-354, and Asn-357 each carry an N-linked (GlcNAc...) asparagine glycan. The disordered stretch occupies residues 351-439 (GSGNGTNSTS…KSGEEKSSSN (89 aa)). Over residues 362–414 (SGGGSPSPGGGSGSPPSTGGGSGSPPSTGGGGGSPSKGGGGGKSGGSNNGDGG) the composition is skewed to gly residues. Basic and acidic residues predominate over residues 418-436 (ASEDEKSADSSGKSGEEKS). A helical membrane pass occupies residues 442 to 462 (LPLGISLPTLLSLGAGGWGVW). At 463–498 (KYFIKPRRHPESELPLKQNISLQVNMGNATVVNAGQ) the chain is on the cytoplasmic side.

It is found in the membrane. This is an uncharacterized protein from Arabidopsis thaliana (Mouse-ear cress).